Consider the following 152-residue polypeptide: Putative aluminum-activated malate transporter 11 (152 aa).

The next 2 membrane-spanning stretches (helical) occupy residues 48 to 68 (VIHAFKVGHSLTLVSLLYFME) and 78 to 98 (AIWAVMTVVAVLLEFFAVEGL).

This sequence belongs to the aromatic acid exporter (TC 2.A.85) family.

Its subcellular location is the membrane. Its function is as follows. Malate transporter. The protein is Putative aluminum-activated malate transporter 11 (ALMT11) of Arabidopsis thaliana (Mouse-ear cress).